Reading from the N-terminus, the 64-residue chain is DNA-binding protein 7 (64 aa).

Lys-5 and Lys-7 each carry N6-methyllysine.

It belongs to the 7 kDa DNA-binding/endoribonuclease P2 family. In terms of assembly, monomer.

It localises to the cytoplasm. Functionally, can constrain negative DNA supercoils. May be involved in maintaining the integrity of the genome at high temperature. The protein is DNA-binding protein 7 of Sulfurisphaera tokodaii (strain DSM 16993 / JCM 10545 / NBRC 100140 / 7) (Sulfolobus tokodaii).